We begin with the raw amino-acid sequence, 613 residues long: Glutathione S-transferase C-terminal domain-containing protein (613 aa).

One can recognise a GST C-terminal domain in the interval 116-312 (LGFKKTCLKA…QQVPGVRFAA (197 aa)).

The protein belongs to the GSTCD family.

Its subcellular location is the cytoplasm. The polypeptide is Glutathione S-transferase C-terminal domain-containing protein (gstcd) (Xenopus laevis (African clawed frog)).